We begin with the raw amino-acid sequence, 430 residues long: Serine hydroxymethyltransferase 2 (430 aa).

Residues L128 and 132–134 (GHL) each bind (6S)-5,6,7,8-tetrahydrofolate. Residue K237 is modified to N6-(pyridoxal phosphate)lysine.

The protein belongs to the SHMT family. Homodimer. Requires pyridoxal 5'-phosphate as cofactor.

It is found in the cytoplasm. The enzyme catalyses (6R)-5,10-methylene-5,6,7,8-tetrahydrofolate + glycine + H2O = (6S)-5,6,7,8-tetrahydrofolate + L-serine. Its pathway is one-carbon metabolism; tetrahydrofolate interconversion. The protein operates within amino-acid biosynthesis; glycine biosynthesis; glycine from L-serine: step 1/1. Functionally, catalyzes the reversible interconversion of serine and glycine with tetrahydrofolate (THF) serving as the one-carbon carrier. This reaction serves as the major source of one-carbon groups required for the biosynthesis of purines, thymidylate, methionine, and other important biomolecules. Also exhibits THF-independent aldolase activity toward beta-hydroxyamino acids, producing glycine and aldehydes, via a retro-aldol mechanism. In Rhodospirillum rubrum (strain ATCC 11170 / ATH 1.1.1 / DSM 467 / LMG 4362 / NCIMB 8255 / S1), this protein is Serine hydroxymethyltransferase 2.